A 258-amino-acid polypeptide reads, in one-letter code: D-beta-hydroxybutyrate dehydrogenase (258 aa).

An NAD(+)-binding site is contributed by 6–30 (VITGSTSGIGLAIARTLAKAGANIV). Ser140 provides a ligand contact to substrate. The active-site Proton acceptor is Tyr153.

This sequence belongs to the short-chain dehydrogenases/reductases (SDR) family.

It carries out the reaction (R)-3-hydroxybutanoate + NAD(+) = acetoacetate + NADH + H(+). This is D-beta-hydroxybutyrate dehydrogenase (bdhA) from Rhizobium meliloti (strain 1021) (Ensifer meliloti).